Consider the following 156-residue polypeptide: Large ribosomal subunit protein uL22 (156 aa).

Belongs to the universal ribosomal protein uL22 family. Part of the 50S ribosomal subunit.

This protein binds specifically to 23S rRNA. It makes multiple contacts with different domains of the 23S rRNA in the assembled 50S subunit and ribosome. Its function is as follows. The globular domain of the protein is located near the polypeptide exit tunnel on the outside of the subunit, while an extended beta-hairpin is found that lines the wall of the exit tunnel in the center of the 70S ribosome. This Hyperthermus butylicus (strain DSM 5456 / JCM 9403 / PLM1-5) protein is Large ribosomal subunit protein uL22.